Reading from the N-terminus, the 436-residue chain is GTPase Der (436 aa).

2 EngA-type G domains span residues 4-167 and 176-351; these read PVVA…PKEE and VKFS…DNHS. Residues 10-17, 57-61, 119-122, 182-189, 229-233, and 294-297 each bind GTP; these read GRPNVGKS, DTGGI, NKVD, DTAGM, and NKWD. The KH-like domain maps to 352–436; that stretch reads LRVQSSMLND…PIRVIARKRK (85 aa).

Belongs to the TRAFAC class TrmE-Era-EngA-EngB-Septin-like GTPase superfamily. EngA (Der) GTPase family. As to quaternary structure, associates with the 50S ribosomal subunit.

Functionally, GTPase that plays an essential role in the late steps of ribosome biogenesis. In Listeria innocua serovar 6a (strain ATCC BAA-680 / CLIP 11262), this protein is GTPase Der.